Consider the following 1458-residue polypeptide: Secretory phospholipase A2 receptor (1458 aa).

An N-terminal signal peptide occupies residues 1-23 (MLLSLLLLLLLGAPRRCTEGAAA). Topologically, residues 24 to 1393 (ALSPERVLKW…EHPGKGPSHS (1370 aa)) are extracellular. 17 disulfides stabilise this stretch: Cys49/Cys62, Cys87/Cys104, Cys176/Cys202, Cys190/Cys217, Cys258/Cys352, Cys328/Cys344, Cys404/Cys499, Cys476/Cys491, Cys615/Cys632, Cys697/Cys794, Cys772/Cys786, Cys838/Cys935, Cys912/Cys927, Cys1065/Cys1085, Cys1207/Cys1221, Cys1278/Cys1373, and Cys1350/Cys1365. The Ricin B-type lectin domain occupies 49-113 (CIQAGKSVLT…CDSTHVSLRW (65 aa)). Asn91 carries N-linked (GlcNAc...) asparagine glycosylation. The 49-residue stretch at 171 to 219 (AHGTPCMFPFQYNHQWHHECTREGRQDDSLWCATTSRYERDEKWGFCPD) folds into the Fibronectin type-II domain. C-type lectin domains are found at residues 227–356 (CDAV…KKYL), 374–502 (TDCE…CKKP), 511–645 (SGCQ…KQPV), 660–798 (HPCY…KIPR), 815–939 (LFHQ…KRKT), 954–1098 (GTCP…EKIQ), 1117–1231 (LEYG…AICH), and 1243–1376 (ELCS…CKMK). N-linked (GlcNAc...) asparagine glycans are attached at residues Asn408, Asn431, and Asn452. The helical transmembrane segment at 1394–1416 (IVPLAVALTLVVILAIITLSFYI) threads the bilayer. The Cytoplasmic segment spans residues 1417–1458 (YKQNKGFFRRLAGVGNSYYPTTNFSTIHLEENILISDLEKND). The Endocytosis signal motif lies at 1432–1438 (NSYYPTT).

As to quaternary structure, interacts with sPLA2-IB/PLA2G1B; this interaction mediates intracellular signaling as well as clearance of extracellular sPLA2-IB/PLA2G1B via endocytotic pathway. Interacts with sPLA2-X/PLA2G10; this interaction mediates sPLA2-X/PLA2G10 clearance and inactivation. The secretory phospholipase A2 receptor form may be produced by the action of metalloproteinases. It contains all extracellular domains and only lacks transmembrane and cytosolic regions. It is however unclear whether this form is produced by proteolytic cleavage as suggested by some experiments, or by alternative splicing. In terms of tissue distribution, lung, skeletal muscle, brain, kidney and heart.

Its subcellular location is the cell membrane. The protein resides in the secreted. Receptor for secretory phospholipase A2 (sPLA2). Also able to bind to snake PA2-like toxins. Although its precise function remains unclear, binding of sPLA2 to its receptor participates in both positive and negative regulation of sPLA2 functions as well as clearance of sPLA2. Binding of sPLA2-IB/PLA2G1B induces various effects depending on the cell type, such as activation of the mitogen-activated protein kinase (MAPK) cascade to induce cell proliferation, the production of lipid mediators, selective release of arachidonic acid in bone marrow-derived mast cells. In neutrophils, binding of sPLA2-IB/PLA2G1B can activate p38 MAPK to stimulate elastase release and cell adhesion. May be involved in responses in pro-inflammatory cytokine productions during endotoxic shock. Also has endocytic properties and rapidly internalizes sPLA2 ligands, which is particularly important for the clearance of extracellular sPLA2s to protect their potent enzymatic activities. The soluble secretory phospholipase A2 receptor form is circulating and acts as a negative regulator of sPLA2 functions by blocking the biological functions of sPLA2-IB/PLA2G1B and sPLA2-X/PLA2G10. The chain is Secretory phospholipase A2 receptor (PLA2R1) from Oryctolagus cuniculus (Rabbit).